The primary structure comprises 520 residues: MKIDETTYYSVLGLPTTANKKDIHKSYLRLARKLHPDKSKSNDFEELFKVVVQAHSILTDISSKQEYDAILKRKGLSNYTPLGYKEHTKKQNQSNNLNQQDASKNSKKNDGVPTQSKVTRKNKPYEQQPYGFGLDFNEGSKMKKDKQKGRNTSKNSKEQQGSQETTNTSENLQRNAKGNKNNKNPRKDRFHTLDNSLDTENDNKRRNIKKAKDRTSKDQNTYSHTNYQRKRNKVKFTQGSIRMRNPEATQSNPDLQNDWDPLKDIISQFGNSNIQDDFGIENIKPSSDPRTFELEDLSLDCEYDFVESNSRVRRANMQNVFINEMDRLMINDPLDMSSIKHSLYSIPYTKRQKTSQSTYTFNDQNYRFTERLPRQENSEGPFGEIPSVFESSTGTMENHRSDFNLRGRPETRENDNIIIPEMMHFPDAVTSKEEEVSLKTRFNHFNEDCNRTKEYILKVLKNRISVDKDLSDMMTVPEYHSLILATKSFDVHLSKQLLELNELQFNAGQRYTELFKSIQY.

The J domain maps to 7–71; it reads TYYSVLGLPT…SSKQEYDAIL (65 aa). Disordered regions lie at residues 82 to 257 and 389 to 409; these read LGYK…DLQN and FESS…RGRP. Over residues 91–100 the composition is skewed to low complexity; that stretch reads QNQSNNLNQQ. Residues 152–182 show a composition bias toward polar residues; the sequence is TSKNSKEQQGSQETTNTSENLQRNAKGNKNN. Over residues 397-409 the composition is skewed to basic and acidic residues; that stretch reads ENHRSDFNLRGRP.

Its subcellular location is the cytoplasm. It localises to the nucleus. The sequence is that of J protein JJJ2 (JJJ2) from Vanderwaltozyma polyspora (strain ATCC 22028 / DSM 70294 / BCRC 21397 / CBS 2163 / NBRC 10782 / NRRL Y-8283 / UCD 57-17) (Kluyveromyces polysporus).